The following is a 350-amino-acid chain: Heat-inducible transcription repressor HrcA (350 aa).

This sequence belongs to the HrcA family.

Negative regulator of class I heat shock genes (grpE-dnaK-dnaJ and groELS operons). Prevents heat-shock induction of these operons. The polypeptide is Heat-inducible transcription repressor HrcA (Xanthomonas campestris pv. campestris (strain ATCC 33913 / DSM 3586 / NCPPB 528 / LMG 568 / P 25)).